A 105-amino-acid polypeptide reads, in one-letter code: N(2)-fixation sustaining protein CowN (105 aa).

The protein belongs to the CowN family.

In terms of biological role, is required to sustain N(2)-dependent growth in the presence of low levels of carbon monoxide (CO). Probably acts by protecting the N(2) fixation ability of the nitrogenase complex, which is inactivated in the presence of CO. The polypeptide is N(2)-fixation sustaining protein CowN (Tolumonas auensis (strain DSM 9187 / NBRC 110442 / TA 4)).